The primary structure comprises 298 residues: Acetylglutamate kinase (298 aa).

Substrate-binding positions include 67-68, arginine 89, and asparagine 193; that span reads GG.

Belongs to the acetylglutamate kinase family. ArgB subfamily.

The protein localises to the cytoplasm. It carries out the reaction N-acetyl-L-glutamate + ATP = N-acetyl-L-glutamyl 5-phosphate + ADP. It functions in the pathway amino-acid biosynthesis; L-arginine biosynthesis; N(2)-acetyl-L-ornithine from L-glutamate: step 2/4. Its function is as follows. Catalyzes the ATP-dependent phosphorylation of N-acetyl-L-glutamate. The sequence is that of Acetylglutamate kinase from Desulfitobacterium hafniense (strain DSM 10664 / DCB-2).